A 166-amino-acid chain; its full sequence is Co-chaperone protein HscB homolog (166 aa).

Residues 3–75 (QYFTLFRIEP…IDRAAYLLKT (73 aa)) form the J domain.

Belongs to the HscB family. Interacts with HscA and stimulates its ATPase activity.

Functionally, co-chaperone involved in the maturation of iron-sulfur cluster-containing proteins. Seems to help targeting proteins to be folded toward HscA. The sequence is that of Co-chaperone protein HscB homolog from Neisseria meningitidis serogroup C (strain 053442).